We begin with the raw amino-acid sequence, 959 residues long: Translation initiation factor IF-2 (959 aa).

Residues 33-373 (SHASSVEEAD…PVTERKFHEL (341 aa)) are disordered. Residues 46-60 (IASSFSAGVTKNVQA) show a composition bias toward polar residues. A compositionally biased stretch (basic and acidic residues) spans 63–73 (AKDKQVAEQKA). The span at 76 to 100 (AKATTPQPAASKAAEKPAAATQEAS) shows a compositional bias: low complexity. Basic and acidic residues-rich tracts occupy residues 112-125 (FKAE…EQVA), 134-143 (SNDRKSDYRQ), and 179-192 (NDGH…DKNR). Positions 193 to 211 (SFNANSRQQDIGRQGQTQA) are enriched in polar residues. Basic and acidic residues-rich tracts occupy residues 234 to 258 (ARQR…RQEA) and 266 to 276 (QTEDKKHREAP). Over residues 277 to 287 (AKATEPAEPVA) the composition is skewed to low complexity. Residues 306-323 (NRPDKAHDRDHGLEDGQK) are compositionally biased toward basic and acidic residues. Residues 328–346 (SWNSQNQVRNQKNSNWNNN) are compositionally biased toward low complexity. A compositionally biased stretch (basic residues) spans 347–357 (KKNKKGKHHKN). The tr-type G domain maps to 460–629 (ERAPVVTIMG…LLVAEVEELK (170 aa)). Positions 469 to 476 (GHVDHGKT) are G1. Residue 469-476 (GHVDHGKT) coordinates GTP. The tract at residues 494-498 (GITQH) is G2. The tract at residues 515–518 (DTPG) is G3. GTP contacts are provided by residues 515–519 (DTPGH) and 569–572 (NKID). Positions 569–572 (NKID) are G4. A G5 region spans residues 605–607 (SAK).

Belongs to the TRAFAC class translation factor GTPase superfamily. Classic translation factor GTPase family. IF-2 subfamily.

It is found in the cytoplasm. Its function is as follows. One of the essential components for the initiation of protein synthesis. Protects formylmethionyl-tRNA from spontaneous hydrolysis and promotes its binding to the 30S ribosomal subunits. Also involved in the hydrolysis of GTP during the formation of the 70S ribosomal complex. This is Translation initiation factor IF-2 from Streptococcus equi subsp. zooepidemicus (strain H70).